Reading from the N-terminus, the 177-residue chain is Large ribosomal subunit protein uL6 (177 aa).

This sequence belongs to the universal ribosomal protein uL6 family. As to quaternary structure, part of the 50S ribosomal subunit.

Functionally, this protein binds to the 23S rRNA, and is important in its secondary structure. It is located near the subunit interface in the base of the L7/L12 stalk, and near the tRNA binding site of the peptidyltransferase center. The protein is Large ribosomal subunit protein uL6 of Aliivibrio fischeri (strain MJ11) (Vibrio fischeri).